The chain runs to 543 residues: Zinc finger CCHC domain-containing protein 7 (543 aa).

Residues 51 to 71 (EEEHEEKNSGNSESSSSKPNQ) form a disordered region. The span at 59–68 (SGNSESSSSK) shows a compositional bias: low complexity. Glycyl lysine isopeptide (Lys-Gly) (interchain with G-Cter in SUMO2) cross-links involve residues lysine 131, lysine 139, lysine 141, lysine 239, and lysine 254. 3 CCHC-type zinc fingers span residues 241–258 (IICR…NCPL), 263–280 (RRCF…SCPA), and 304–321 (KQCD…ACTE). A Glycyl lysine isopeptide (Lys-Gly) (interchain with G-Cter in SUMO2) cross-link involves residue lysine 339. A CCHC-type 4 zinc finger spans residues 348–365 (AYCYHCAQKGHYGHECPE). Glycyl lysine isopeptide (Lys-Gly) (interchain with G-Cter in SUMO2) cross-links involve residues lysine 412, lysine 417, and lysine 435. Positions 414-543 (PYIKAANENP…FLIKQRKKKS (130 aa)) are disordered. 2 stretches are compositionally biased toward basic and acidic residues: residues 441–457 (QENK…NRNW) and 465–475 (RHREVDEDFPR). Lysine 478 is covalently cross-linked (Glycyl lysine isopeptide (Lys-Gly) (interchain with G-Cter in SUMO2)). Polar residues predominate over residues 479-491 (TYSSPGSFKTQKP). Phosphoserine is present on residues serine 482 and serine 485. Glycyl lysine isopeptide (Lys-Gly) (interchain with G-Cter in SUMO2) cross-links involve residues lysine 487, lysine 490, and lysine 493. Positions 493–502 (KPFHRSSHYH) are enriched in basic residues. Residues 503 to 515 (TSREDKSPKEGKR) show a composition bias toward basic and acidic residues. A Glycyl lysine isopeptide (Lys-Gly) (interchain with G-Cter in SUMO2) cross-link involves residue lysine 537.

Component of a nucleolar TRAMP-like complex, an ATP-dependent exosome regulatory complex consisting of a helicase (MTREX), an oligadenylate polymerase (TENT4B or TENT4A), and a substrate specific RNA-binding factor (ZCCHC7 or ZCCHC8). Several TRAMP-like complexes exist with specific compositions and are associated with nuclear, or nucleolar RNA exosomes.

The protein localises to the nucleus. It localises to the nucleolus. This Homo sapiens (Human) protein is Zinc finger CCHC domain-containing protein 7 (ZCCHC7).